Consider the following 407-residue polypeptide: Formate-dependent phosphoribosylglycinamide formyltransferase (407 aa).

Residues 28 to 29 (EL) and glutamate 88 each bind N(1)-(5-phospho-beta-D-ribosyl)glycinamide. ATP is bound by residues arginine 121, lysine 162, 167–172 (SSGKGQ), 202–205 (EGFI), and glutamate 210. The ATP-grasp domain occupies 126–320 (RLAAEELGVA…EFELHAKAIL (195 aa)). Residues glutamate 279 and glutamate 291 each coordinate Mg(2+). N(1)-(5-phospho-beta-D-ribosyl)glycinamide is bound by residues aspartate 298, lysine 367, and 374–375 (RR).

The protein belongs to the PurK/PurT family. As to quaternary structure, homodimer.

The enzyme catalyses N(1)-(5-phospho-beta-D-ribosyl)glycinamide + formate + ATP = N(2)-formyl-N(1)-(5-phospho-beta-D-ribosyl)glycinamide + ADP + phosphate + H(+). Its pathway is purine metabolism; IMP biosynthesis via de novo pathway; N(2)-formyl-N(1)-(5-phospho-D-ribosyl)glycinamide from N(1)-(5-phospho-D-ribosyl)glycinamide (formate route): step 1/1. In terms of biological role, involved in the de novo purine biosynthesis. Catalyzes the transfer of formate to 5-phospho-ribosyl-glycinamide (GAR), producing 5-phospho-ribosyl-N-formylglycinamide (FGAR). Formate is provided by PurU via hydrolysis of 10-formyl-tetrahydrofolate. In Herminiimonas arsenicoxydans, this protein is Formate-dependent phosphoribosylglycinamide formyltransferase.